The sequence spans 440 residues: Enolase 1-2 (440 aa).

Residues His-160 and Glu-169 each contribute to the substrate site. The active-site Proton donor is the Glu-212. Asp-247, Glu-296, and Asp-321 together coordinate Mg(2+). 2 residues coordinate substrate: Glu-296 and Asp-321. Catalysis depends on Lys-346, which acts as the Proton acceptor. Residues 373–376 and Lys-397 contribute to the substrate site; that span reads SHRS.

This sequence belongs to the enolase family. In terms of assembly, homodimer. The cofactor is Mg(2+).

It is found in the cytoplasm. It catalyses the reaction (2R)-2-phosphoglycerate = phosphoenolpyruvate + H2O. It functions in the pathway carbohydrate degradation; glycolysis; pyruvate from D-glyceraldehyde 3-phosphate: step 4/5. The sequence is that of Enolase 1-2 (eno102) from Schizosaccharomyces pombe (strain 972 / ATCC 24843) (Fission yeast).